The primary structure comprises 724 residues: Catalase-peroxidase (724 aa).

Positions 96-225 form a cross-link, tryptophyl-tyrosyl-methioninium (Trp-Tyr) (with M-251); that stretch reads WHAAGTYRVA…LAAVMMGLIY (130 aa). The Proton acceptor role is filled by histidine 97. The segment at residues 225–251 is a cross-link (tryptophyl-tyrosyl-methioninium (Tyr-Met) (with W-96)); the sequence is YVNPEGVDGNPDPLRTAEDVRITFERM. Histidine 266 is a binding site for heme b.

It belongs to the peroxidase family. Peroxidase/catalase subfamily. Homodimer or homotetramer. It depends on heme b as a cofactor. In terms of processing, formation of the three residue Trp-Tyr-Met cross-link is important for the catalase, but not the peroxidase activity of the enzyme.

It catalyses the reaction H2O2 + AH2 = A + 2 H2O. The catalysed reaction is 2 H2O2 = O2 + 2 H2O. Its function is as follows. Bifunctional enzyme with both catalase and broad-spectrum peroxidase activity. In Halorhodospira halophila (strain DSM 244 / SL1) (Ectothiorhodospira halophila (strain DSM 244 / SL1)), this protein is Catalase-peroxidase.